Here is a 197-residue protein sequence, read N- to C-terminus: dTTP/UTP pyrophosphatase (197 aa).

Asp70 (proton acceptor) is an active-site residue.

This sequence belongs to the Maf family. YhdE subfamily. It depends on a divalent metal cation as a cofactor.

It localises to the cytoplasm. The enzyme catalyses dTTP + H2O = dTMP + diphosphate + H(+). It catalyses the reaction UTP + H2O = UMP + diphosphate + H(+). Functionally, nucleoside triphosphate pyrophosphatase that hydrolyzes dTTP and UTP. May have a dual role in cell division arrest and in preventing the incorporation of modified nucleotides into cellular nucleic acids. The polypeptide is dTTP/UTP pyrophosphatase (yceF2) (Shigella sonnei (strain Ss046)).